A 207-amino-acid polypeptide reads, in one-letter code: ATP synthase subunit a (207 aa).

Helical transmembrane passes span 3–23, 62–82, 88–108, 119–139, 158–178, and 180–200; these read QHVI…TIFA, LIAS…IPGL, NLNT…FEGI, FLGP…LSHL, LISV…VMLI, and LIAV…YIAG.

It belongs to the ATPase A chain family. In terms of assembly, F-type ATPases have 2 components, CF(1) - the catalytic core - and CF(0) - the membrane proton channel. CF(1) has five subunits: alpha(3), beta(3), gamma(1), delta(1), epsilon(1). CF(0) has three main subunits: a(1), b(2) and c(9-12). The alpha and beta chains form an alternating ring which encloses part of the gamma chain. CF(1) is attached to CF(0) by a central stalk formed by the gamma and epsilon chains, while a peripheral stalk is formed by the delta and b chains.

It is found in the cell inner membrane. Its function is as follows. Key component of the proton channel; it plays a direct role in the translocation of protons across the membrane. The sequence is that of ATP synthase subunit a from Sulfurihydrogenibium sp. (strain YO3AOP1).